Reading from the N-terminus, the 152-residue chain is Transcriptional regulator MraZ (152 aa).

SpoVT-AbrB domains are found at residues 5-52 and 81-124; these read ATLV…PLPE and ASEC…DETT.

The protein belongs to the MraZ family. Forms oligomers.

It localises to the cytoplasm. It is found in the nucleoid. In terms of biological role, negatively regulates its own expression and that of the subsequent genes in the proximal part of the division and cell wall (dcw) gene cluster. Acts by binding directly to DNA. May also regulate the expression of genes outside the dcw cluster. This chain is Transcriptional regulator MraZ, found in Salmonella gallinarum (strain 287/91 / NCTC 13346).